We begin with the raw amino-acid sequence, 607 residues long: Elongation factor 4 (607 aa).

The 183-residue stretch at 11 to 193 folds into the tr-type G domain; sequence EKIRNFSIIA…QIVEKVPAPQ (183 aa). Residues 23–28 and 140–143 each bind GTP; these read DHGKST and NKID.

It belongs to the TRAFAC class translation factor GTPase superfamily. Classic translation factor GTPase family. LepA subfamily.

The protein resides in the cell membrane. It catalyses the reaction GTP + H2O = GDP + phosphate + H(+). Required for accurate and efficient protein synthesis under certain stress conditions. May act as a fidelity factor of the translation reaction, by catalyzing a one-codon backward translocation of tRNAs on improperly translocated ribosomes. Back-translocation proceeds from a post-translocation (POST) complex to a pre-translocation (PRE) complex, thus giving elongation factor G a second chance to translocate the tRNAs correctly. Binds to ribosomes in a GTP-dependent manner. This chain is Elongation factor 4, found in Lactococcus lactis subsp. cremoris (strain MG1363).